A 289-amino-acid polypeptide reads, in one-letter code: ATP synthase gamma chain (289 aa).

Belongs to the ATPase gamma chain family. F-type ATPases have 2 components, CF(1) - the catalytic core - and CF(0) - the membrane proton channel. CF(1) has five subunits: alpha(3), beta(3), gamma(1), delta(1), epsilon(1). CF(0) has three main subunits: a, b and c.

It is found in the cell inner membrane. Functionally, produces ATP from ADP in the presence of a proton gradient across the membrane. The gamma chain is believed to be important in regulating ATPase activity and the flow of protons through the CF(0) complex. The sequence is that of ATP synthase gamma chain from Cereibacter sphaeroides (strain ATCC 17023 / DSM 158 / JCM 6121 / CCUG 31486 / LMG 2827 / NBRC 12203 / NCIMB 8253 / ATH 2.4.1.) (Rhodobacter sphaeroides).